A 330-amino-acid chain; its full sequence is Polyprenyl transferase ausN (330 aa).

The next 5 helical transmembrane spans lie at 116 to 136 (AATI…LFLP), 165 to 185 (LILI…GMEP), 189 to 209 (ILSM…IDLV), 238 to 258 (AYSL…LGGL), and 260 to 280 (VPFV…FLRA).

It belongs to the UbiA prenyltransferase family. The cofactor is Mg(2+).

The protein localises to the membrane. The catalysed reaction is 3,5-dimethylorsellinate + (2E,6E)-farnesyl diphosphate = (3R)-3-farnesyl-6-hydroxy-2,3,5-trimethyl-4-oxocyclohexa-1,5-diene-1-carboxylate + diphosphate + H(+). Its pathway is secondary metabolite biosynthesis; terpenoid biosynthesis. Functionally, polyprenyl transferase; part of the gene cluster B that mediates the biosynthesis of austinol and dehydroaustinol, two fungal meroterpenoids. The first step of the pathway is the synthesis of 3,5-dimethylorsellinic acid by the polyketide synthase ausA. 3,5-dimethylorsellinic acid is then prenylated by the polyprenyl transferase ausN. Further epoxidation by the FAD-dependent monooxygenase ausM and cyclization by the probable terpene cyclase ausL lead to the formation of protoaustinoid A. Protoaustinoid A is then oxidized to spiro-lactone preaustinoid A3 by the combined action of the FAD-binding monooxygenases ausB and ausC, and the dioxygenase ausE. Acid-catalyzed keto-rearrangement and ring contraction of the tetraketide portion of preaustinoid A3 by ausJ lead to the formation of preaustinoid A4. The aldo-keto reductase ausK, with the help of ausH, is involved in the next step by transforming preaustinoid A4 into isoaustinone which is in turn hydroxylated by the P450 monooxygenase ausI to form austinolide. Finally, the cytochrome P450 monooxygenase ausG modifies austinolide to austinol. Austinol can be further modified to dehydroaustinol which forms a diffusible complex with diorcinol that initiates conidiation. Due to genetic rearrangements of the clusters and the subsequent loss of some enzymes, the end products of the Emericella nidulans austinoid biosynthesis clusters are austinol and dehydroaustinol, even if additional enzymes, such as the O-acetyltransferase ausQ and the cytochrome P450 monooxygenase ausR are still functional. The protein is Polyprenyl transferase ausN of Emericella nidulans (strain FGSC A4 / ATCC 38163 / CBS 112.46 / NRRL 194 / M139) (Aspergillus nidulans).